A 242-amino-acid polypeptide reads, in one-letter code: Probable ABC transporter ATP-binding protein PEB1C (242 aa).

The 235-residue stretch at 2–236 folds into the ABC transporter domain; it reads IELKNVNKYY…PKTERARLFL (235 aa). Residue 34–41 participates in ATP binding; that stretch reads GPSGSGKS.

The protein belongs to the ABC transporter superfamily.

The protein localises to the cell inner membrane. Functionally, most probably involved, with PEB1, in a binding-protein-dependent transport system for an amino acid. Probably responsible for energy coupling to the transport system. In Campylobacter jejuni subsp. jejuni serotype O:23/36 (strain 81-176), this protein is Probable ABC transporter ATP-binding protein PEB1C (peb1C).